Here is an 819-residue protein sequence, read N- to C-terminus: Nonribosomal peptide synthetase 9 (819 aa).

The tract at residues 202 to 591 (LQAPTQHAVR…GRKDTQAKIR (390 aa)) is adenylation (A) domain. A Carrier domain is found at 722 to 798 (QPRNERERLI…SLAEFLSSSS (77 aa)). Serine 759 carries the post-translational modification O-(pantetheine 4'-phosphoryl)serine.

This sequence belongs to the NRP synthetase family.

The protein operates within secondary metabolite biosynthesis. Nonribosomal peptide synthetase; part of the Fg3_54/C64 gene cluster that mediates the biosynthesis of the octapeptide fusaoctaxin A, a virulence factor that is required for cell-to-cell invasiveness of plant host. The 2 nonribosomal peptide synthetases NRPS9 and NRPS5 form an assembly line which likely utilizes GABA as a starter unit (loaded on the unique module M1 of NRPS9) and sequentially incorporates seven extender units composed of the residues L-Ala, L-allo-Ile, L-Ser, L-Val, L-Ser, L-Leu and L-Leu, respectively. During the process, each of the residues that are tethered on modules M3-M7 of NRPS5 containing an E domain can undergo an epimerization reaction to produce a D-configuration before the transpeptidation reaction occurs. The elongation of the peptidyl chain might be terminated by module M8-mediated L-Leu incorporation, followed by R domain-catalyzed 4 electron reduction to release the resulting octapeptide from the assembly line as an alcohol. Fusaoctaxin A is cleaved by the cluster specific ABC transporter FGM5 to the pentapeptide fusapentaxin A and the tripeptide fusatrixin A. The other enzymes from the cluster, FGM1, FGM2, FGM3 and FGM9 seem not to be involved in the biosynthesis of fusaoctaxin A and their functions have still to be determined. This is Nonribosomal peptide synthetase 9 from Gibberella zeae (strain ATCC MYA-4620 / CBS 123657 / FGSC 9075 / NRRL 31084 / PH-1) (Wheat head blight fungus).